Reading from the N-terminus, the 504-residue chain is Potassium voltage-gated channel subfamily V member 1 (504 aa).

Disordered regions lie at residues 1-22 (MDLS…GGSL) and 172-193 (KKDT…QGPC). Residues 1–214 (MDLSPRNRPL…EKPGSSTAAR (214 aa)) are Cytoplasmic-facing. Positions 10–22 (LLESSSLDSGGSL) are enriched in low complexity. Positions 172-185 (KKDTDDQESQHESE) are enriched in basic and acidic residues. A helical transmembrane segment spans residues 215-235 (IFGVISIIFVAVSIVNMALMS). The Extracellular portion of the chain corresponds to 236–242 (AELSWLN). Residues 243-263 (LQLLEILEYVCISWFTGEFIL) form a helical membrane-spanning segment. The Cytoplasmic portion of the chain corresponds to 264–280 (RFLCVKDRCRFLRKVPN). The helical transmembrane segment at 281-301 (IIDLLAILPFYITLLVESLSG) threads the bilayer. The Extracellular portion of the chain corresponds to 302–313 (SHTTQELENVGR). A helical; Voltage-sensor membrane pass occupies residues 314–335 (LVQVLRLLRALRMLKLGRHSTG). The Cytoplasmic segment spans residues 336-349 (LRSLGMTITQCYEE). A helical membrane pass occupies residues 350 to 370 (VGLLLLFLSVGISIFSTIEYF). A Selectivity filter motif is present at residues 396–401 (TVGYGD). Residues 411–431 (IVAFMCILSGILVLALPIAII) form a helical membrane-spanning segment. Topologically, residues 432-504 (NDRFSACYFT…RSSGGDDFWF (73 aa)) are cytoplasmic.

The protein belongs to the potassium channel family. V (TC 1.A.1.2) subfamily. Kv8.1/KCNV1 sub-subfamily. As to quaternary structure, heteromultimer with KCNB1 and KCNB2. Interacts with KCNC4 and KCND1. Detected in brain, throughout layers II, IV and VI of the brain cortex. Detected in cerebellum and hippocampus, in the granule cell layer, Purkinje cell layer, pyramidal cell layer and dentate gyrus. Detected at lower levels in olfactory bulb, amygdala, thalamus, hypothalamus, midbrain and brainstem.

It is found in the cell membrane. In terms of biological role, potassium channel subunit that does not form functional channels by itself. Modulates KCNB1 and KCNB2 channel activity by shifting the threshold for inactivation to more negative values and by slowing the rate of inactivation. Can down-regulate the channel activity of KCNB1, KCNB2, KCNC4 and KCND1, possibly by trapping them in intracellular membranes. In Mesocricetus auratus (Golden hamster), this protein is Potassium voltage-gated channel subfamily V member 1 (KCNV1).